Reading from the N-terminus, the 484-residue chain is Coronin-1B (484 aa).

Position 2 is a phosphoserine (S2). WD repeat units lie at residues 80 to 120, 130 to 170, 174 to 213, 217 to 260, and 265 to 305; these read GHTG…LTSP, GHTK…ELYR, LHPDLIYNVSWNHNGSLFCSACKDKSVRIIDPRRGTLVAE, AHEG…EPMA, and DSSN…PYIH. The interval 404–446 is disordered; the sequence is LKVSRRNVLSDSRPASYSRSGASTATAVTDVPSGNLAGAGEAG. Residues 410–430 show a composition bias toward polar residues; it reads NVLSDSRPASYSRSGASTATA. The stretch at 444-482 forms a coiled coil; sequence EAGKLEEVMQELRALRMLVKEQGERISRLEEQLGRMENG.

The protein belongs to the WD repeat coronin family. As to quaternary structure, forms homooligomers, but does not form complexes with the other coronins. Interacts with Arp2/3 complex components, including ACTR2, ARPC1B and ARPC2. Binds actin. Phosphorylation on Ser-2 regulates the interaction with the Arp2/3 complex and cell motility in fibroblasts. Phosphorylation does not seem to affect subcellular location. Ubiquitous.

It localises to the cytoplasm. The protein localises to the cytoskeleton. The protein resides in the stress fiber. In terms of biological role, regulates leading edge dynamics and cell motility in fibroblasts. May be involved in cytokinesis and signal transduction. The polypeptide is Coronin-1B (Coro1b) (Mus musculus (Mouse)).